Reading from the N-terminus, the 475-residue chain is Aspartate ammonia-lyase (475 aa).

L-aspartate contacts are provided by T104, S143, T144, N145, T190, and H191. The interval 320-329 (GSSIMPGKVN) is SS loop. The active-site Proton acceptor is the S321. S322 and K327 together coordinate L-aspartate.

Belongs to the class-II fumarase/aspartase family. Aspartase subfamily. In terms of assembly, homotetramer.

The enzyme catalyses L-aspartate = fumarate + NH4(+). In terms of biological role, catalyzes the reversible conversion of L-aspartate to fumarate and ammonia. The polypeptide is Aspartate ammonia-lyase (Bacillus subtilis (strain 168)).